The chain runs to 181 residues: MTMENNAEFNRRLEYVGTIATMMKRTLNVLRQQGYCTQQDADSLCVSDDTAAWLCGRLPTCNFVSFRVHIDQFEHPNPALEYFKFEESLAQRQHVGPRYTYMNYTLFKNVVALKLVVYTRTLQANMYADGLPYFVQNFSETSYKHVRVYVRKLGAIQVATLSVYEQIIEDTINELVVNHVD.

Functionally, plays a role in late gene expression. The chain is Protein AC41 (AC41) from Autographa californica nuclear polyhedrosis virus (AcMNPV).